The primary structure comprises 778 residues: Subtilisin-like protease SBT3.6 (778 aa).

An N-terminal signal peptide occupies residues methionine 1–arginine 22. Positions serine 23–alanine 113 are cleaved as a propeptide — activation peptide. The region spanning valine 34–alanine 113 is the Inhibitor I9 domain. A glycan (N-linked (GlcNAc...) asparagine) is linked at asparagine 69. Residues threonine 117–alanine 625 enclose the Peptidase S8 domain. Aspartate 147 acts as the Charge relay system in catalysis. Asparagine 158, asparagine 180, asparagine 202, and asparagine 206 each carry an N-linked (GlcNAc...) asparagine glycan. Histidine 222 (charge relay system) is an active-site residue. N-linked (GlcNAc...) asparagine glycosylation is found at asparagine 237, asparagine 399, asparagine 414, and asparagine 541. The region spanning serine 388–threonine 483 is the PA domain. Serine 556 serves as the catalytic Charge relay system. N-linked (GlcNAc...) asparagine glycans are attached at residues asparagine 648, asparagine 724, and asparagine 759.

It belongs to the peptidase S8 family.

It localises to the secreted. The polypeptide is Subtilisin-like protease SBT3.6 (Arabidopsis thaliana (Mouse-ear cress)).